We begin with the raw amino-acid sequence, 152 residues long: Ribonuclease pancreatic beta-type (152 aa).

The signal sequence occupies residues 1-25 (MGLXKSFALFSLLVLVLGWVQPSLS). A disordered region spans residues 25 to 53 (SGESRESSADKFKRQHMDPDSPSKSSPTY). A compositionally biased stretch (basic and acidic residues) spans 27-45 (ESRESSADKFKRQHMDPDS). Residues Lys-35 and Arg-38 each coordinate substrate. His-40 acts as the Proton acceptor in catalysis. Disulfide bonds link Cys-54–Cys-112, Cys-68–Cys-123, Cys-86–Cys-138, and Cys-93–Cys-100. Residues 69 to 73 (KRVNT) and Lys-94 contribute to the substrate site. Catalysis depends on His-147, which acts as the Proton donor.

This sequence belongs to the pancreatic ribonuclease family. In terms of assembly, monomer.

Its subcellular location is the secreted. The catalysed reaction is an [RNA] containing cytidine + H2O = an [RNA]-3'-cytidine-3'-phosphate + a 5'-hydroxy-ribonucleotide-3'-[RNA].. It carries out the reaction an [RNA] containing uridine + H2O = an [RNA]-3'-uridine-3'-phosphate + a 5'-hydroxy-ribonucleotide-3'-[RNA].. Endonuclease that catalyzes the cleavage of RNA on the 3' side of pyrimidine nucleotides. Acts on single-stranded and double-stranded RNA. This chain is Ribonuclease pancreatic beta-type, found in Rattus tiomanicus (Malayan field rat).